A 432-amino-acid chain; its full sequence is MRVVILGSGVVGVASAWYLNQAGHEVTVIDREPGAALETSAANAGQISPGYAAPWAAPGVPLKAIKWMFQRHAPLAVRLDGTQFQLKWMWQMLRNCDTSHYMENKGRMVRLAEYSRDCLKALRAETNIQYEGRQGGTLQLFRTEQQYENATRDIAVLEDAGVPYQLLESSRLAEVEPALAEVAHKLTGGLQLPNDETGDCQLFTQNLARMAEQAGVKFRFNTPVDQLLCDGEQIYGVKCGDEVIKADAYVMAFGSYSTAMLKGIVDIPVYPLKGYSLTIPIAQEDGAPVSTILDETYKIAITRFDNRIRVGGMAEIVGFNTELLQPRRETLEMVVRDLYPRGGHVEQATFWTGLRPMTPDGTPVVGRTRFKNLWLNTGHGTLGWTMACGSGQLLSDLLSGRTPAIPYEDLSVARYSRGFTPSRPGHLHGAHS.

3–17 (VVILGSGVVGVASAW) is a binding site for FAD.

The protein belongs to the DadA oxidoreductase family. It depends on FAD as a cofactor.

The enzyme catalyses a D-alpha-amino acid + A + H2O = a 2-oxocarboxylate + AH2 + NH4(+). The protein operates within amino-acid degradation; D-alanine degradation; NH(3) and pyruvate from D-alanine: step 1/1. Oxidative deamination of D-amino acids. The chain is D-amino acid dehydrogenase from Shigella sonnei (strain Ss046).